The primary structure comprises 237 residues: Large ribosomal subunit protein uL2 (237 aa).

The segment covering 1–11 (MGKRLISQNRG) has biased composition (polar residues). 2 disordered regions span residues 1–26 (MGKRLISQNRGRGTPKYRSPSHKRKG) and 204–237 (PYGGGRHQHLGKPSSVSRNTSPGRKVGHIASRRT). 2 stretches are compositionally biased toward basic residues: residues 13–26 (GTPKYRSPSHKRKG) and 228–237 (KVGHIASRRT).

The protein belongs to the universal ribosomal protein uL2 family. As to quaternary structure, part of the 50S ribosomal subunit. Forms a bridge to the 30S subunit in the 70S ribosome.

One of the primary rRNA binding proteins. Required for association of the 30S and 50S subunits to form the 70S ribosome, for tRNA binding and peptide bond formation. It has been suggested to have peptidyltransferase activity; this is somewhat controversial. Makes several contacts with the 16S rRNA in the 70S ribosome. This is Large ribosomal subunit protein uL2 from Methanococcus vannielii.